The primary structure comprises 801 residues: Probable inorganic carbon transporter subunit DabA (801 aa).

Zn(2+)-binding residues include C330, D332, H489, and C504.

This sequence belongs to the inorganic carbon transporter (TC 9.A.2) DabA family. Forms a complex with DabB. The cofactor is Zn(2+).

It is found in the cell inner membrane. Functionally, part of an energy-coupled inorganic carbon pump. The protein is Probable inorganic carbon transporter subunit DabA of Jannaschia sp. (strain CCS1).